Reading from the N-terminus, the 476-residue chain is Aspartyl/glutamyl-tRNA(Asn/Gln) amidotransferase subunit B (476 aa).

It belongs to the GatB/GatE family. GatB subfamily. Heterotrimer of A, B and C subunits.

The enzyme catalyses L-glutamyl-tRNA(Gln) + L-glutamine + ATP + H2O = L-glutaminyl-tRNA(Gln) + L-glutamate + ADP + phosphate + H(+). It catalyses the reaction L-aspartyl-tRNA(Asn) + L-glutamine + ATP + H2O = L-asparaginyl-tRNA(Asn) + L-glutamate + ADP + phosphate + 2 H(+). Allows the formation of correctly charged Asn-tRNA(Asn) or Gln-tRNA(Gln) through the transamidation of misacylated Asp-tRNA(Asn) or Glu-tRNA(Gln) in organisms which lack either or both of asparaginyl-tRNA or glutaminyl-tRNA synthetases. The reaction takes place in the presence of glutamine and ATP through an activated phospho-Asp-tRNA(Asn) or phospho-Glu-tRNA(Gln). In Neisseria meningitidis serogroup A / serotype 4A (strain DSM 15465 / Z2491), this protein is Aspartyl/glutamyl-tRNA(Asn/Gln) amidotransferase subunit B.